We begin with the raw amino-acid sequence, 56 residues long: Large ribosomal subunit protein bL33 (56 aa).

The protein belongs to the bacterial ribosomal protein bL33 family.

This chain is Large ribosomal subunit protein bL33, found in Orientia tsutsugamushi (strain Ikeda) (Rickettsia tsutsugamushi).